The following is a 356-amino-acid chain: MAKKVVVGMSGGVDSSVAAHLLKEQGYEVIGVTMQVWQEDDYYEDMESGCCSLSAVEDAKMVAYHLNIPHYVMNFKEAFKKNVIDYFIQEYMEGKTPNPCIACNKYIKFDELLKRAMDLGADYVATGHYATVEKINDRYTLRKSKDHNKDQTYALYNLTQFQLAHTLMPCGIYKKEEIREIAREIGLMVHSKRDSEEICFIPDNDHGAYIKRITKDKVKEGNFIDKEGNVLGKHKGIVYYTLGQRKGLGLSFGVPTYVIDIKPYTNEVVLGSEEDIFKTDLVAKDVNFLPFENLTSPMKVEAKIRYSSKPAEATISCLDEERIKVKFTDRQRAITKGQSVVFYKDNILIGGGIIDS.

ATP-binding positions include 8–15 (GMSGGVDS) and Met-34. Cys-103 acts as the Nucleophile in catalysis. Cys-103 and Cys-199 are oxidised to a cystine. Position 127 (Gly-127) interacts with ATP. The interaction with tRNA stretch occupies residues 149 to 151 (KDQ). Cys-199 functions as the Cysteine persulfide intermediate in the catalytic mechanism. The segment at 305-306 (RY) is interaction with tRNA.

This sequence belongs to the MnmA/TRMU family.

It localises to the cytoplasm. The catalysed reaction is S-sulfanyl-L-cysteinyl-[protein] + uridine(34) in tRNA + AH2 + ATP = 2-thiouridine(34) in tRNA + L-cysteinyl-[protein] + A + AMP + diphosphate + H(+). In terms of biological role, catalyzes the 2-thiolation of uridine at the wobble position (U34) of tRNA, leading to the formation of s(2)U34. The protein is tRNA-specific 2-thiouridylase MnmA of Clostridium kluyveri (strain ATCC 8527 / DSM 555 / NBRC 12016 / NCIMB 10680 / K1).